Here is a 199-residue protein sequence, read N- to C-terminus: Elongation factor Ts, chloroplastic (199 aa).

This sequence belongs to the EF-Ts family.

The protein resides in the plastid. It is found in the chloroplast. Functionally, associates with the EF-Tu.GDP complex and induces the exchange of GDP to GTP. It remains bound to the aminoacyl-tRNA.EF-Tu.GTP complex up to the GTP hydrolysis stage on the ribosome. In Galdieria sulphuraria (Red alga), this protein is Elongation factor Ts, chloroplastic (tsf).